Here is a 429-residue protein sequence, read N- to C-terminus: Cholesterol 7-desaturase nvd (429 aa).

A helical transmembrane segment spans residues 23 to 43 (FVICLWTLAVTFIRIYWIFFV). The Rieske domain maps to 98-201 (YGILKSSQLK…SQEVDGFIFI (104 aa)). [2Fe-2S] cluster is bound by residues cysteine 138, histidine 140, cysteine 158, and histidine 161.

It belongs to the cholesterol 7-desaturase family. [2Fe-2S] cluster is required as a cofactor. Expressed predominantly in the prothoracic gland and weakly in brain and malpighian tubules.

Its subcellular location is the membrane. It catalyses the reaction cholesterol + NADPH + O2 + H(+) = 7-dehydrocholesterol + NADP(+) + 2 H2O. The enzyme catalyses cholesterol + NADH + O2 + H(+) = 7-dehydrocholesterol + NAD(+) + 2 H2O. It participates in steroid hormone biosynthesis; dafachronic acid biosynthesis. In terms of biological role, catalyzes the production of 7-dehydrocholesterol (7-DHC or cholesta-5,7-dien-3beta-ol) by inserting a double bond (desaturating) at the C7-C8 single bond of cholesterol. Essential regulator of steroid biosynthesis, as this reaction is the first step in the synthesis of the steroid hormone Delta(7)-dafachronic acid. Required for insect molting, metamorphosis and body growth throughout development via the regulation of ecdysteroid biosynthesis in the prothoracic gland. This chain is Cholesterol 7-desaturase nvd, found in Drosophila melanogaster (Fruit fly).